The primary structure comprises 180 residues: UPF0227 protein YpsIP31758_1593 (180 aa).

The protein belongs to the UPF0227 family.

This Yersinia pseudotuberculosis serotype O:1b (strain IP 31758) protein is UPF0227 protein YpsIP31758_1593.